A 492-amino-acid polypeptide reads, in one-letter code: Fumarate hydratase 1, mitochondrial (492 aa).

The N-terminal 28 residues, 1-28 (MSIYVASRRLSGGTTVTALRYATSLRSY), are a transit peptide targeting the mitochondrion. Residues 127-129 (SGT), 157-160 (HPND), 167-169 (SSN), and Thr215 each bind substrate. His216 (proton donor/acceptor) is an active-site residue. The active site involves Ser346. Substrate contacts are provided by residues Ser347 and 352–354 (KVN).

It belongs to the class-II fumarase/aspartase family. Fumarase subfamily. In terms of assembly, homotetramer.

The protein localises to the mitochondrion. The enzyme catalyses (S)-malate = fumarate + H2O. The protein operates within carbohydrate metabolism; tricarboxylic acid cycle; (S)-malate from fumarate: step 1/1. Its activity is regulated as follows. Fumarate hydratase activity (fumarate to L-malate) is strongly inhibited by phosphoenolpyruvate, citrate, oxaloacetate, ATP and ADP. Malate dehydratase activity (malate to fumarate) is activated by oxaloacetate, pyruvate, Asn and Gln. Malate dehydratase activity (malate to fumarate) is inhibited by citrate, succinate, ADP, ATP, glucose-6P and phosphoenolpyruvate. Its function is as follows. Catalyzes the reversible stereospecific interconversion of fumarate to L-malate. Catalyzes the hydration of fumarate to L-malate in the tricarboxylic acid (TCA) cycle to facilitate a transition step in the production of energy in the form of NADH. This Arabidopsis thaliana (Mouse-ear cress) protein is Fumarate hydratase 1, mitochondrial.